The chain runs to 508 residues: Sugar transport protein 12 (508 aa).

Residues 1–22 (MPSVGIVIGDGKKEYPGKLTLY) lie on the Cytoplasmic side of the membrane. The next 12 membrane-spanning stretches (helical) occupy residues 23 to 43 (VTVT…DIGI), 80 to 100 (VSLT…SLVA), 118 to 138 (VLFC…MLIV), 141 to 161 (LLLG…LSEM), 172 to 192 (IGFQ…NFFF), 201 to 221 (LSLG…LILP), 294 to 314 (LTGI…IGFG), 317 to 337 (AALI…VVSI), 347 to 367 (FLFL…AAAI), 383 to 403 (WYAI…AWSW), 426 to 446 (ITVS…LMML), and 451 to 471 (FGLF…VYLF). Residues 472–508 (LPETRGVPIEEMNRVWRSHWYWSKFVDAEKNLTKVVI) are Cytoplasmic-facing.

This sequence belongs to the major facilitator superfamily. Sugar transporter (TC 2.A.1.1) family.

It localises to the membrane. Functionally, mediates an active uptake of hexoses, probably by sugar/hydrogen symport. This Arabidopsis thaliana (Mouse-ear cress) protein is Sugar transport protein 12 (STP12).